The following is an 86-amino-acid chain: Small ribosomal subunit protein uS17 (86 aa).

It belongs to the universal ribosomal protein uS17 family. In terms of assembly, part of the 30S ribosomal subunit.

One of the primary rRNA binding proteins, it binds specifically to the 5'-end of 16S ribosomal RNA. In Halorhodospira halophila (strain DSM 244 / SL1) (Ectothiorhodospira halophila (strain DSM 244 / SL1)), this protein is Small ribosomal subunit protein uS17.